A 39-amino-acid chain; its full sequence is Photosystem II reaction center protein L (39 aa).

A helical membrane pass occupies residues 18-38 (SLYWGLLLIFVLAVLFSNYFF).

Belongs to the PsbL family. In terms of assembly, PSII is composed of 1 copy each of membrane proteins PsbA, PsbB, PsbC, PsbD, PsbE, PsbF, PsbH, PsbI, PsbJ, PsbK, PsbL, PsbM, PsbT, PsbX, PsbY, PsbZ, Psb30/Ycf12, at least 3 peripheral proteins of the oxygen-evolving complex and a large number of cofactors. It forms dimeric complexes.

The protein localises to the plastid thylakoid membrane. Its function is as follows. One of the components of the core complex of photosystem II (PSII). PSII is a light-driven water:plastoquinone oxidoreductase that uses light energy to abstract electrons from H(2)O, generating O(2) and a proton gradient subsequently used for ATP formation. It consists of a core antenna complex that captures photons, and an electron transfer chain that converts photonic excitation into a charge separation. This subunit is found at the monomer-monomer interface and is required for correct PSII assembly and/or dimerization. This Cuscuta gronovii (Common dodder) protein is Photosystem II reaction center protein L.